A 249-amino-acid polypeptide reads, in one-letter code: 2,3-bisphosphoglycerate-dependent phosphoglycerate mutase (249 aa).

Substrate-binding positions include 9–16, 22–23, Arg-61, 88–91, Lys-99, 115–116, and 184–185; these read RHGQSQWN, TG, ERHY, RR, and GN. The active-site Tele-phosphohistidine intermediate is the His-10. The Proton donor/acceptor role is filled by Glu-88.

It belongs to the phosphoglycerate mutase family. BPG-dependent PGAM subfamily. As to quaternary structure, homodimer.

It catalyses the reaction (2R)-2-phosphoglycerate = (2R)-3-phosphoglycerate. Its pathway is carbohydrate degradation; glycolysis; pyruvate from D-glyceraldehyde 3-phosphate: step 3/5. Its function is as follows. Catalyzes the interconversion of 2-phosphoglycerate and 3-phosphoglycerate. The sequence is that of 2,3-bisphosphoglycerate-dependent phosphoglycerate mutase from Xylella fastidiosa (strain M23).